Reading from the N-terminus, the 330-residue chain is 2-phospho-L-lactate transferase (330 aa).

Residue Asp-49 participates in 7,8-didemethyl-8-hydroxy-5-deazariboflavin binding.

Belongs to the CofD family. As to quaternary structure, homodimer. It depends on Mg(2+) as a cofactor.

The catalysed reaction is (2S)-lactyl-2-diphospho-5'-guanosine + 7,8-didemethyl-8-hydroxy-5-deazariboflavin = oxidized coenzyme F420-0 + GMP + H(+). It participates in cofactor biosynthesis; coenzyme F420 biosynthesis. Its function is as follows. Catalyzes the transfer of the 2-phospholactate moiety from (2S)-lactyl-2-diphospho-5'-guanosine to 7,8-didemethyl-8-hydroxy-5-deazariboflavin (FO) with the formation of oxidized coenzyme F420-0 and GMP. The protein is 2-phospho-L-lactate transferase of Haloarcula marismortui (strain ATCC 43049 / DSM 3752 / JCM 8966 / VKM B-1809) (Halobacterium marismortui).